We begin with the raw amino-acid sequence, 528 residues long: Peptide chain release factor 3 (528 aa).

A tr-type G domain is found at Arg9 to Arg280. Residues Ser18–Thr25, Asp86–His90, and Asn140–Asp143 contribute to the GTP site.

It belongs to the TRAFAC class translation factor GTPase superfamily. Classic translation factor GTPase family. PrfC subfamily.

The protein resides in the cytoplasm. Increases the formation of ribosomal termination complexes and stimulates activities of RF-1 and RF-2. It binds guanine nucleotides and has strong preference for UGA stop codons. It may interact directly with the ribosome. The stimulation of RF-1 and RF-2 is significantly reduced by GTP and GDP, but not by GMP. This Symbiobacterium thermophilum (strain DSM 24528 / JCM 14929 / IAM 14863 / T) protein is Peptide chain release factor 3.